A 238-amino-acid polypeptide reads, in one-letter code: Leucine-rich repeat-containing protein 57 (238 aa).

LRR repeat units lie at residues 10–36 (LETS…LQKL), 37–62 (TANL…SFQH), 64–82 (KSFT…DIGK), 83–106 (LKKL…IGQL), 108–128 (SLRT…GLGT), 129–152 (LRQL…VAEL), 154–173 (AIEI…EVSR), and 174–199 (TPRL…ILTD).

The protein is Leucine-rich repeat-containing protein 57 (lrrc57) of Danio rerio (Zebrafish).